Here is a 356-residue protein sequence, read N- to C-terminus: Histidinol-phosphate aminotransferase (356 aa).

At K210 the chain carries N6-(pyridoxal phosphate)lysine.

This sequence belongs to the class-II pyridoxal-phosphate-dependent aminotransferase family. Histidinol-phosphate aminotransferase subfamily. As to quaternary structure, homodimer. Pyridoxal 5'-phosphate is required as a cofactor.

It carries out the reaction L-histidinol phosphate + 2-oxoglutarate = 3-(imidazol-4-yl)-2-oxopropyl phosphate + L-glutamate. It participates in amino-acid biosynthesis; L-histidine biosynthesis; L-histidine from 5-phospho-alpha-D-ribose 1-diphosphate: step 7/9. In Gluconacetobacter diazotrophicus (strain ATCC 49037 / DSM 5601 / CCUG 37298 / CIP 103539 / LMG 7603 / PAl5), this protein is Histidinol-phosphate aminotransferase.